Here is a 206-residue protein sequence, read N- to C-terminus: Small ribosomal subunit protein uS4 (206 aa).

Positions 96–156 (SRLDNVVYRM…EKSRNQSRIA (61 aa)) constitute an S4 RNA-binding domain.

The protein belongs to the universal ribosomal protein uS4 family. In terms of assembly, part of the 30S ribosomal subunit. Contacts protein S5. The interaction surface between S4 and S5 is involved in control of translational fidelity.

Functionally, one of the primary rRNA binding proteins, it binds directly to 16S rRNA where it nucleates assembly of the body of the 30S subunit. With S5 and S12 plays an important role in translational accuracy. This chain is Small ribosomal subunit protein uS4, found in Hydrogenovibrio crunogenus (strain DSM 25203 / XCL-2) (Thiomicrospira crunogena).